The sequence spans 530 residues: Sensor protein kinase PilS (530 aa).

6 consecutive transmembrane segments (helical) span residues 25 to 37, 57 to 70, 76 to 98, 101 to 119, 124 to 144, and 156 to 174; these read LTIG…LISS, WCYL…ALFL, LLPI…YAGG, PSGI…NILL, GLVI…FLSL, and AGGL…QALV. The Cytoplasmic segment spans residues 175–530; it reads RRQEQTETLA…ITFAHPRKLS (356 aa). A PAS domain is found at 196 to 260; sequence ELNALILQRM…KQWRLNPSLR (65 aa). Positions 316-527 constitute a Histidine kinase domain; it reads GIAHEIRNPL…CFRITFAHPR (212 aa). His-319 is subject to Phosphohistidine; by autocatalysis.

In terms of assembly, interacts with PilA.

The protein resides in the cell inner membrane. It catalyses the reaction ATP + protein L-histidine = ADP + protein N-phospho-L-histidine.. Its function is as follows. Member of the two-component regulatory system PilS/PilR that regulates the expression of multiple genes including the type IV pilus (T4P) major subunit PilA. Thereby, plays a major role in the regulation of multiple motility pathways. Functions as a membrane-associated protein kinase that phosphorylates PilR in response to environmental signals leading to activation of specific gene promoters including the pilin gene. The chain is Sensor protein kinase PilS (pilS) from Pseudomonas aeruginosa (strain ATCC 15692 / DSM 22644 / CIP 104116 / JCM 14847 / LMG 12228 / 1C / PRS 101 / PAO1).